We begin with the raw amino-acid sequence, 282 residues long: Bifunctional protein FolD (282 aa).

Residues 164–166 (GAS), I189, and I230 each bind NADP(+).

This sequence belongs to the tetrahydrofolate dehydrogenase/cyclohydrolase family. In terms of assembly, homodimer.

It carries out the reaction (6R)-5,10-methylene-5,6,7,8-tetrahydrofolate + NADP(+) = (6R)-5,10-methenyltetrahydrofolate + NADPH. The enzyme catalyses (6R)-5,10-methenyltetrahydrofolate + H2O = (6R)-10-formyltetrahydrofolate + H(+). The protein operates within one-carbon metabolism; tetrahydrofolate interconversion. Functionally, catalyzes the oxidation of 5,10-methylenetetrahydrofolate to 5,10-methenyltetrahydrofolate and then the hydrolysis of 5,10-methenyltetrahydrofolate to 10-formyltetrahydrofolate. This Campylobacter jejuni subsp. jejuni serotype O:6 (strain 81116 / NCTC 11828) protein is Bifunctional protein FolD.